The following is a 430-amino-acid chain: Serine--tRNA ligase (430 aa).

236 to 238 (TAE) contributes to the L-serine binding site. 267 to 269 (RSE) contacts ATP. Residue Glu-290 participates in L-serine binding. 354–357 (EISS) contributes to the ATP binding site. Ser-390 contacts L-serine.

Belongs to the class-II aminoacyl-tRNA synthetase family. Type-1 seryl-tRNA synthetase subfamily. As to quaternary structure, homodimer. The tRNA molecule binds across the dimer.

It is found in the cytoplasm. It catalyses the reaction tRNA(Ser) + L-serine + ATP = L-seryl-tRNA(Ser) + AMP + diphosphate + H(+). The catalysed reaction is tRNA(Sec) + L-serine + ATP = L-seryl-tRNA(Sec) + AMP + diphosphate + H(+). Its pathway is aminoacyl-tRNA biosynthesis; selenocysteinyl-tRNA(Sec) biosynthesis; L-seryl-tRNA(Sec) from L-serine and tRNA(Sec): step 1/1. In terms of biological role, catalyzes the attachment of serine to tRNA(Ser). Is also able to aminoacylate tRNA(Sec) with serine, to form the misacylated tRNA L-seryl-tRNA(Sec), which will be further converted into selenocysteinyl-tRNA(Sec). The chain is Serine--tRNA ligase from Mannheimia succiniciproducens (strain KCTC 0769BP / MBEL55E).